A 61-amino-acid chain; its full sequence is Small ribosomal subunit protein uS14B (61 aa).

The Zn(2+) site is built by cysteine 24, cysteine 27, cysteine 40, and cysteine 43.

It belongs to the universal ribosomal protein uS14 family. Zinc-binding uS14 subfamily. As to quaternary structure, part of the 30S ribosomal subunit. Contacts proteins S3 and S10. Requires Zn(2+) as cofactor.

Functionally, binds 16S rRNA, required for the assembly of 30S particles and may also be responsible for determining the conformation of the 16S rRNA at the A site. In Bacillus velezensis (strain DSM 23117 / BGSC 10A6 / LMG 26770 / FZB42) (Bacillus amyloliquefaciens subsp. plantarum), this protein is Small ribosomal subunit protein uS14B.